Reading from the N-terminus, the 172-residue chain is Low molecular mass early light-inducible protein HV90, chloroplastic (172 aa).

Residues 1-38 (MATMMSMSSFAGAAVVPRSSASSFGARSLPALGRRALV) constitute a chloroplast transit peptide. 2 helical membrane passes run 106-126 (GQAW…VPLL) and 150-170 (FAML…APFI).

Belongs to the ELIP/psbS family.

It localises to the plastid. Its subcellular location is the chloroplast membrane. Its function is as follows. Probably involved in the integration of pigments into the mature pigment-protein complexes. The protein is Low molecular mass early light-inducible protein HV90, chloroplastic of Hordeum vulgare (Barley).